We begin with the raw amino-acid sequence, 151 residues long: Ubiquitin-conjugating enzyme E2-17 kDa (151 aa).

A UBC core domain is found at 4–150; it reads PARRRLMRDF…VKACVEQSFI (147 aa). Cys88 (glycyl thioester intermediate) is an active-site residue.

The protein belongs to the ubiquitin-conjugating enzyme family.

Its subcellular location is the nucleus. The enzyme catalyses S-ubiquitinyl-[E1 ubiquitin-activating enzyme]-L-cysteine + [E2 ubiquitin-conjugating enzyme]-L-cysteine = [E1 ubiquitin-activating enzyme]-L-cysteine + S-ubiquitinyl-[E2 ubiquitin-conjugating enzyme]-L-cysteine.. It participates in protein modification; protein ubiquitination. E2 ubiquitin-conjugating enzyme that accepts ubiquitin from the ubiquitin-activating enzyme E1 and transfers it to a E3 ubiquitin-protein ligase. Required for postreplication repair of UV-damaged DNA. Involved in the negative regulation of the Ras/MAPK signaling pathway in the wing by acting with the putative E3 ligases poe, Kcmf1 and Ufd4 to mediate the ubiquitination and proteasomal degradation of rl/MAPK. Required for in mitophagy. The polypeptide is Ubiquitin-conjugating enzyme E2-17 kDa (Drosophila melanogaster (Fruit fly)).